Consider the following 218-residue polypeptide: Mediator of RNA polymerase II transcription subunit 20 (218 aa).

Belongs to the Mediator complex subunit 20 family. Component of the Mediator complex.

It localises to the nucleus. Functionally, component of the Mediator complex, a coactivator involved in the regulated transcription of nearly all RNA polymerase II-dependent genes. Mediator functions as a bridge to convey information from gene-specific regulatory proteins to the basal RNA polymerase II transcription machinery. Mediator is recruited to promoters by direct interactions with regulatory proteins and serves as a scaffold for the assembly of a functional preinitiation complex with RNA polymerase II and the general transcription factors. The polypeptide is Mediator of RNA polymerase II transcription subunit 20 (SRB2) (Yarrowia lipolytica (strain CLIB 122 / E 150) (Yeast)).